The sequence spans 201 residues: Small ribosomal subunit protein uS4c (201 aa).

Residues 15–44 are disordered; sequence LGALPGLTNKRPRAGSDLRNQSRSGKKSQY. Residues 89 to 149 form the S4 RNA-binding domain; it reads MRLDNILFRL…DEQKSRALIQ (61 aa).

The protein belongs to the universal ribosomal protein uS4 family. As to quaternary structure, part of the 30S ribosomal subunit. Contacts protein S5. The interaction surface between S4 and S5 is involved in control of translational fidelity.

The protein resides in the plastid. The protein localises to the chloroplast. In terms of biological role, one of the primary rRNA binding proteins, it binds directly to 16S rRNA where it nucleates assembly of the body of the 30S subunit. Functionally, with S5 and S12 plays an important role in translational accuracy. The sequence is that of Small ribosomal subunit protein uS4c (rps4) from Helianthus annuus (Common sunflower).